Consider the following 981-residue polypeptide: Calsyntenin-1 (981 aa).

A signal peptide spans 1–28; sequence MLRRPAPALAPAARLLLAGLLCGGGVWA. Over 29–859 the chain is Extracellular; that stretch reads ARVNKHKPWL…PHPFAVVPST (831 aa). 2 consecutive Cadherin domains span residues 38 to 164 and 165 to 265; these read LEPT…APVF and KEKS…TPGW. 3 N-linked (GlcNAc...) asparagine glycosylation sites follow: Asn-346, Asn-366, and Asn-515. The chain crosses the membrane as a helical span at residues 860-880; it reads ATVVIVVCVSFLVFMIILGVF. At 881-981 the chain is on the cytoplasmic side; that stretch reads RIRAAHRRTM…LEWDDSTLSY (101 aa). The segment at 915 to 981 is disordered; the sequence is METYEDQHSS…LEWDDSTLSY (67 aa). Residues 925-960 show a composition bias toward acidic residues; sequence EEEEEEEEEEESEDGEEEDDITSAESESSEEEEGEQ. Residues 962–981 are compositionally biased toward polar residues; sequence DPQNATRQQQLEWDDSTLSY.

The protein belongs to the calsyntenin family. Directly interacts with APBA2. Forms a tripartite complex with APBA2 and APP. Interacts with KLC1. In terms of assembly, interacts with APBB1; this interaction stabilizes AlcICD metabolism. As to quaternary structure, interacts with PSEN1. In terms of processing, proteolytically processed under normal cellular conditions. A primary zeta-cleavage generates a large extracellular (soluble) N-terminal domain (sAlc) and a short C-terminal transmembrane fragment (CTF1). A secondary cleavage catalyzed by presenilin gamma-secretase within the transmembrane domain releases the beta-Alc-alpha chain in the extracellular milieu and produces an intracellular fragment (AlcICD). This processing is strongly suppressed in the tripartite complex formed with APBA2 and APP, which seems to prevent the association with PSEN1. Expressed in the brain and, a lower level, in the heart, skeletal muscle, kidney and placenta. Accumulates in dystrophic neurites around the amyloid core of Alzheimer disease senile plaques (at protein level).

It is found in the postsynaptic cell membrane. The protein resides in the endoplasmic reticulum membrane. The protein localises to the golgi apparatus membrane. Its subcellular location is the cell projection. It localises to the neuron projection. It is found in the nucleus. Postsynaptic adhesion molecule that binds to presynaptic neurexins to mediate both excitatory and inhibitory synapse formation. Promotes synapse development by acting as a cell adhesion molecule at the postsynaptic membrane, which associates with neurexin-alpha at the presynaptic membrane. Also functions as a cargo in axonal anterograde transport by acting as a molecular adapter that promotes KLC1 association with vesicles. Complex formation with APBA2 and APP, stabilizes APP metabolism and enhances APBA2-mediated suppression of beta-APP40 secretion, due to the retardation of intracellular APP maturation. In terms of biological role, as intracellular fragment AlcICD, suppresses APBB1-dependent transactivation stimulated by APP C-terminal intracellular fragment (AICD), most probably by competing with AICD for APBB1-binding. Functionally, in complex with APBA2 and C99, a C-terminal APP fragment, abolishes C99 interaction with PSEN1 and thus APP C99 cleavage by gamma-secretase, most probably through stabilization of the direct interaction between APBA2 and APP. The polypeptide is Calsyntenin-1 (Homo sapiens (Human)).